A 271-amino-acid polypeptide reads, in one-letter code: Formamidopyrimidine-DNA glycosylase (271 aa).

Pro-2 acts as the Schiff-base intermediate with DNA in catalysis. Catalysis depends on Glu-3, which acts as the Proton donor. The active-site Proton donor; for beta-elimination activity is the Lys-58. DNA is bound by residues Arg-110 and Arg-152. The FPG-type zinc finger occupies 237–271 (AVYGQTGKPCTVCGTPIARIRLGNRSTWFCPVCQK). Residue Arg-261 is the Proton donor; for delta-elimination activity of the active site.

Belongs to the FPG family. In terms of assembly, monomer. Requires Zn(2+) as cofactor.

The enzyme catalyses Hydrolysis of DNA containing ring-opened 7-methylguanine residues, releasing 2,6-diamino-4-hydroxy-5-(N-methyl)formamidopyrimidine.. The catalysed reaction is 2'-deoxyribonucleotide-(2'-deoxyribose 5'-phosphate)-2'-deoxyribonucleotide-DNA = a 3'-end 2'-deoxyribonucleotide-(2,3-dehydro-2,3-deoxyribose 5'-phosphate)-DNA + a 5'-end 5'-phospho-2'-deoxyribonucleoside-DNA + H(+). Its function is as follows. Involved in base excision repair of DNA damaged by oxidation or by mutagenic agents. Acts as a DNA glycosylase that recognizes and removes damaged bases. Has a preference for oxidized purines, such as 7,8-dihydro-8-oxoguanine (8-oxoG). Has AP (apurinic/apyrimidinic) lyase activity and introduces nicks in the DNA strand. Cleaves the DNA backbone by beta-delta elimination to generate a single-strand break at the site of the removed base with both 3'- and 5'-phosphates. This is Formamidopyrimidine-DNA glycosylase from Geobacter sulfurreducens (strain ATCC 51573 / DSM 12127 / PCA).